Reading from the N-terminus, the 443-residue chain is Differentially expressed in FDCP 8 homolog A (443 aa).

The tract at residues 1-49 (MEYDDKLVRFRQGHLNPFDKQGGAERHPADSEAQPPKDSSTISPHSIPE) is disordered. 2 Phorbol-ester/DAG-type zinc fingers span residues 134-185 (EHRF…TKPC) and 364-424 (IHTT…STSC).

The protein belongs to the DEF8 family.

Functionally, positively regulates lysosome peripheral distribution and ruffled border formation in osteoclasts. Involved in bone resorption. The chain is Differentially expressed in FDCP 8 homolog A (def8-a) from Xenopus laevis (African clawed frog).